We begin with the raw amino-acid sequence, 467 residues long: Dimethylamine methyltransferase MtbB3 (467 aa).

Position 356 (Pyl356) is a non-standard amino acid, pyrrolysine.

Belongs to the dimethylamine methyltransferase family.

It carries out the reaction Co(I)-[dimethylamine-specific corrinoid protein] + dimethylamine + H(+) = methyl-Co(III)-[dimethylamine-specific corrinoid protein] + methylamine. Its pathway is one-carbon metabolism; methanogenesis from dimethylamine. Functionally, catalyzes the transfer of a methyl group from dimethylamine to the corrinoid cofactor of MtbC. The chain is Dimethylamine methyltransferase MtbB3 (mtbB3) from Methanosarcina acetivorans (strain ATCC 35395 / DSM 2834 / JCM 12185 / C2A).